A 131-amino-acid chain; its full sequence is Small ribosomal subunit protein eS17 (131 aa).

It belongs to the eukaryotic ribosomal protein eS17 family.

The sequence is that of Small ribosomal subunit protein eS17 (RPS17) from Theileria annulata.